Reading from the N-terminus, the 341-residue chain is S-adenosylmethionine:tRNA ribosyltransferase-isomerase (341 aa).

This sequence belongs to the QueA family. In terms of assembly, monomer.

Its subcellular location is the cytoplasm. The catalysed reaction is 7-aminomethyl-7-carbaguanosine(34) in tRNA + S-adenosyl-L-methionine = epoxyqueuosine(34) in tRNA + adenine + L-methionine + 2 H(+). It participates in tRNA modification; tRNA-queuosine biosynthesis. Transfers and isomerizes the ribose moiety from AdoMet to the 7-aminomethyl group of 7-deazaguanine (preQ1-tRNA) to give epoxyqueuosine (oQ-tRNA). The polypeptide is S-adenosylmethionine:tRNA ribosyltransferase-isomerase (Caldanaerobacter subterraneus subsp. tengcongensis (strain DSM 15242 / JCM 11007 / NBRC 100824 / MB4) (Thermoanaerobacter tengcongensis)).